We begin with the raw amino-acid sequence, 713 residues long: MFNKQSVSLEWAGRTLTIETGQVARQADGAVMVQYGDTIVLATAVFAKEAKPGQDFFPLTVNYQEKYFASGRIPGGFFKREGRPTEKETLTSRLIDRPIRPLFVDGFKHEVQVVVTTLSYDLENDADIIALVGASAALVLSGAPFMGPIGAARVGYKDGQYIINPTIAELEESELDLVVAGTTDAVMMVESQAAELSEDVMLGAVVAGHDAMQPVIDAIIALAEKAAKEPFAYEPPDHSAALKSVIDTVGADLSKAYKITAKGERYAAIGAAKDKAKAALLGTDEAPGVMTPEVFKTVFKEAEASVVRGDILKTGQRIDGRKLDQIRPIVAEAGFLPRTHGSSLFTRGETQAICVATLGTSDDEQYIDGLDGTKKEKFMLHYNFPPYSVGETGRMGGAGRREIGHGKLAWRALKAVLPKHEDFPYTIRMVSEITESNGSSSMATVCGCSLAMMDAGVPLTRPVSGIAMGLILEGSEFAVLSDILGDEDHLGDMDFKVAGTENGVTSLQMDIKVAGITKDIMGKALEQAKGGRMHILGEMGKALTASRGQLSENAPQMEIIKVPTDKIRDVIGSGGKVIRGIVDETGAKVNIDDDGTVQISAMDRKSIDAAIKMIKGITAEAEVGEIYEGKVVSMKDFGIFVNFFGPKDGLVHVSQMANKRIGHPKEMVKEGDKVWVKLMGFDERGKVRLSMKVVDQETGKELAEEAGDDASED.

Aspartate 488 and aspartate 494 together coordinate Mg(2+). One can recognise a KH domain in the interval 555–614; it reads PQMEIIKVPTDKIRDVIGSGGKVIRGIVDETGAKVNIDDDGTVQISAMDRKSIDAAIKMI. The S1 motif domain maps to 624 to 692; that stretch reads GEIYEGKVVS…ERGKVRLSMK (69 aa).

The protein belongs to the polyribonucleotide nucleotidyltransferase family. It depends on Mg(2+) as a cofactor.

The protein localises to the cytoplasm. The catalysed reaction is RNA(n+1) + phosphate = RNA(n) + a ribonucleoside 5'-diphosphate. Its function is as follows. Involved in mRNA degradation. Catalyzes the phosphorolysis of single-stranded polyribonucleotides processively in the 3'- to 5'-direction. This is Polyribonucleotide nucleotidyltransferase from Hyphomonas neptunium (strain ATCC 15444).